The sequence spans 415 residues: L-cysteine:1D-myo-inositol 2-amino-2-deoxy-alpha-D-glucopyranoside ligase (415 aa).

Residues 1–20 (MQSWSETAVPSVPGQGPPLR) form a disordered region. Cys43 provides a ligand contact to Zn(2+). Residues 43–46 (CGIT), Thr58, and 81–83 (NVT) each bind L-cysteinyl-5'-AMP. Positions 45–55 (ITPYDATHLGH) match the 'HIGH' region motif. The 'ERGGDP' region signature appears at 187 to 192 (ERGGDP). Trp227 is a binding site for L-cysteinyl-5'-AMP. Cys231 contacts Zn(2+). Position 249 to 251 (249 to 251 (GSD)) interacts with L-cysteinyl-5'-AMP. His256 contributes to the Zn(2+) binding site. Ile283 provides a ligand contact to L-cysteinyl-5'-AMP. The short motif at 289 to 293 (KMSKS) is the 'KMSKS' region element.

Belongs to the class-I aminoacyl-tRNA synthetase family. MshC subfamily. As to quaternary structure, monomer. Requires Zn(2+) as cofactor.

The enzyme catalyses 1D-myo-inositol 2-amino-2-deoxy-alpha-D-glucopyranoside + L-cysteine + ATP = 1D-myo-inositol 2-(L-cysteinylamino)-2-deoxy-alpha-D-glucopyranoside + AMP + diphosphate + H(+). Its function is as follows. Catalyzes the ATP-dependent condensation of GlcN-Ins and L-cysteine to form L-Cys-GlcN-Ins. The protein is L-cysteine:1D-myo-inositol 2-amino-2-deoxy-alpha-D-glucopyranoside ligase of Rhodococcus jostii (strain RHA1).